We begin with the raw amino-acid sequence, 122 residues long: Large ribosomal subunit protein uL14 (122 aa).

Belongs to the universal ribosomal protein uL14 family. In terms of assembly, part of the 50S ribosomal subunit. Forms a cluster with proteins L3 and L19. In the 70S ribosome, L14 and L19 interact and together make contacts with the 16S rRNA in bridges B5 and B8.

In terms of biological role, binds to 23S rRNA. Forms part of two intersubunit bridges in the 70S ribosome. The chain is Large ribosomal subunit protein uL14 from Cutibacterium acnes (strain DSM 16379 / KPA171202) (Propionibacterium acnes).